The chain runs to 504 residues: Aspartyl/glutamyl-tRNA(Asn/Gln) amidotransferase subunit B (504 aa).

It belongs to the GatB/GatE family. GatB subfamily. In terms of assembly, heterotrimer of A, B and C subunits.

The enzyme catalyses L-glutamyl-tRNA(Gln) + L-glutamine + ATP + H2O = L-glutaminyl-tRNA(Gln) + L-glutamate + ADP + phosphate + H(+). It carries out the reaction L-aspartyl-tRNA(Asn) + L-glutamine + ATP + H2O = L-asparaginyl-tRNA(Asn) + L-glutamate + ADP + phosphate + 2 H(+). Its function is as follows. Allows the formation of correctly charged Asn-tRNA(Asn) or Gln-tRNA(Gln) through the transamidation of misacylated Asp-tRNA(Asn) or Glu-tRNA(Gln) in organisms which lack either or both of asparaginyl-tRNA or glutaminyl-tRNA synthetases. The reaction takes place in the presence of glutamine and ATP through an activated phospho-Asp-tRNA(Asn) or phospho-Glu-tRNA(Gln). The chain is Aspartyl/glutamyl-tRNA(Asn/Gln) amidotransferase subunit B from Tropheryma whipplei (strain Twist) (Whipple's bacillus).